The chain runs to 390 residues: Protein DDI1 homolog (390 aa).

Aspartate 205 is an active-site residue. The segment at 322 to 344 (MHAPRHQDPATTATTASNPAAPV) is disordered. The segment covering 330–343 (PATTATTASNPAAP) has biased composition (low complexity).

The protein belongs to the DDI1 family.

The protein resides in the cytoplasm. With respect to regulation, inhibited by pepstatin, diazoacetyl-DL-norleucine methyl ester (DAN) and nelfinavir. Inhibited by the proteinase inhibitors lopinavir and ritonavir. Its function is as follows. Aspartic protease. The protein is Protein DDI1 homolog of Leishmania major.